Consider the following 254-residue polypeptide: Uracil-DNA glycosylase (254 aa).

Aspartate 78 serves as the catalytic Proton acceptor.

This sequence belongs to the uracil-DNA glycosylase (UDG) superfamily. UNG family.

It localises to the cytoplasm. The enzyme catalyses Hydrolyzes single-stranded DNA or mismatched double-stranded DNA and polynucleotides, releasing free uracil.. Excises uracil residues from the DNA which can arise as a result of misincorporation of dUMP residues by DNA polymerase or due to deamination of cytosine. This chain is Uracil-DNA glycosylase, found in Bordetella petrii (strain ATCC BAA-461 / DSM 12804 / CCUG 43448).